Reading from the N-terminus, the 391-residue chain is Chaperone protein DnaJ (391 aa).

The J domain maps to 6-70; sequence DYYEILEVSR…EKRKLYDTYG (65 aa). A CR-type zinc finger spans residues 145 to 226; the sequence is GCIKNVKYTR…CKSRRMVDEV (82 aa). Residues C158, C161, C174, C177, C200, C203, C214, and C217 each coordinate Zn(2+). CXXCXGXG motif repeat units follow at residues 158 to 165, 174 to 181, 200 to 207, and 214 to 221; these read CPDCNGSG, CSDCNGEG, CPSCKGEG, and CKKCKSRR.

It belongs to the DnaJ family. In terms of assembly, homodimer. Zn(2+) serves as cofactor.

Its subcellular location is the cytoplasm. Participates actively in the response to hyperosmotic and heat shock by preventing the aggregation of stress-denatured proteins and by disaggregating proteins, also in an autonomous, DnaK-independent fashion. Unfolded proteins bind initially to DnaJ; upon interaction with the DnaJ-bound protein, DnaK hydrolyzes its bound ATP, resulting in the formation of a stable complex. GrpE releases ADP from DnaK; ATP binding to DnaK triggers the release of the substrate protein, thus completing the reaction cycle. Several rounds of ATP-dependent interactions between DnaJ, DnaK and GrpE are required for fully efficient folding. Also involved, together with DnaK and GrpE, in the DNA replication of plasmids through activation of initiation proteins. The chain is Chaperone protein DnaJ from Mycoplasmoides gallisepticum (strain R(low / passage 15 / clone 2)) (Mycoplasma gallisepticum).